The sequence spans 61 residues: Small ribosomal subunit protein uS14B (61 aa).

Cys24, Cys27, Cys40, and Cys43 together coordinate Zn(2+).

The protein belongs to the universal ribosomal protein uS14 family. Zinc-binding uS14 subfamily. Part of the 30S ribosomal subunit. Contacts proteins S3 and S10. It depends on Zn(2+) as a cofactor.

Its function is as follows. Binds 16S rRNA, required for the assembly of 30S particles and may also be responsible for determining the conformation of the 16S rRNA at the A site. This chain is Small ribosomal subunit protein uS14B, found in Listeria welshimeri serovar 6b (strain ATCC 35897 / DSM 20650 / CCUG 15529 / CIP 8149 / NCTC 11857 / SLCC 5334 / V8).